The sequence spans 377 residues: Chaperone MoxR1 (377 aa).

The tract at residues 1–33 (MTSAGGFPAGAGGYQTPGGHSASPAHEAPPGGA) is disordered. Residues 7-16 (FPAGAGGYQT) are compositionally biased toward gly residues. Residues 19–33 (GHSASPAHEAPPGGA) are compositionally biased toward low complexity. ATP is bound at residue 78–85 (GVPGVAKT).

It belongs to the MoxR family. Interacts with RipA. Interacts with host Toll-like receptor 4 (TLR4).

Functionally, displays ATP-enhanced chaperone activity. Required for the proper folding of the peptidoglycan endopeptidase RipA and its secretion through the TAT secretion system. In vitro, prevents thermal aggregation of MalZ protein and protects the functional activity of the restriction enzyme NdeI from thermal inactivation. Could be a moonlighting protein that uses a multipronged approach to dampen host-directed immunity for efficient replication, survival and pathogenesis. Can enhance virulence by inhibiting autophagy and apoptosis, and disrupting cellular bioenergetics. Binds and activates host TLR4 on the surface of macrophage cells, leading to the activation of the host NFKB and MAPK signaling cascades and enhanced secretion of proinflammatory cytokines. Inhibits autophagic flux via activation of PI3K-AKT-MTOR-ULK1 signaling cascade and represses apoptosis via inhibiting protooncogene c-FOS and MAPK JNK1/2. Also induces robust disruption of cellular bioenergetics by metabolic reprogramming to rewire the citric acid cycle intermediates for its benefit. The protein is Chaperone MoxR1 of Mycobacterium tuberculosis (strain ATCC 25618 / H37Rv).